We begin with the raw amino-acid sequence, 142 residues long: Ribosome-binding factor A (142 aa).

The segment covering 120-130 (EVRRDIDHAPA) has biased composition (basic and acidic residues). A disordered region spans residues 120 to 142 (EVRRDIDHAPAEDEFPTDGDDGQ). The span at 131-142 (EDEFPTDGDDGQ) shows a compositional bias: acidic residues.

This sequence belongs to the RbfA family. Monomer. Binds 30S ribosomal subunits, but not 50S ribosomal subunits or 70S ribosomes.

It is found in the cytoplasm. In terms of biological role, one of several proteins that assist in the late maturation steps of the functional core of the 30S ribosomal subunit. Associates with free 30S ribosomal subunits (but not with 30S subunits that are part of 70S ribosomes or polysomes). Required for efficient processing of 16S rRNA. May interact with the 5'-terminal helix region of 16S rRNA. The sequence is that of Ribosome-binding factor A from Paramagnetospirillum magneticum (strain ATCC 700264 / AMB-1) (Magnetospirillum magneticum).